The sequence spans 469 residues: 3-isopropylmalate dehydratase large subunit (469 aa).

3 residues coordinate [4Fe-4S] cluster: Cys-347, Cys-407, and Cys-410.

Belongs to the aconitase/IPM isomerase family. LeuC type 1 subfamily. In terms of assembly, heterodimer of LeuC and LeuD. [4Fe-4S] cluster serves as cofactor.

It catalyses the reaction (2R,3S)-3-isopropylmalate = (2S)-2-isopropylmalate. The protein operates within amino-acid biosynthesis; L-leucine biosynthesis; L-leucine from 3-methyl-2-oxobutanoate: step 2/4. Catalyzes the isomerization between 2-isopropylmalate and 3-isopropylmalate, via the formation of 2-isopropylmaleate. The protein is 3-isopropylmalate dehydratase large subunit of Prochlorococcus marinus (strain MIT 9515).